Here is a 101-residue protein sequence, read N- to C-terminus: Gastrin (101 aa).

Residues 1-21 (MPRLCVYMLVLVLALATFSEA) form the signal peptide. The disordered stretch occupies residues 23 to 101 (WKPRSQLQDA…FGRRSAEEDQ (79 aa)). Positions 25–37 (PRSQLQDASSGPG) are enriched in polar residues. Y87 bears the Sulfotyrosine mark. Phenylalanine amide is present on F92. Positions 92-101 (FGRRSAEEDQ) are enriched in basic and acidic residues. A Phosphoserine modification is found at S96. Residues 96-101 (SAEEDQ) constitute a propeptide that is removed on maturation.

This sequence belongs to the gastrin/cholecystokinin family. Post-translationally, sulfation enhances proteolytic processing, and blocks peptide degradation. Levels of sulfation differ between proteolytically-cleaved gastrins and between tissues. Abundantly expressed in the stomach and duodenum. Low levels in brain, ovary and pancreas.

Its subcellular location is the secreted. Its function is as follows. Gastrin stimulates the stomach mucosa to produce and secrete hydrochloric acid and the pancreas to secrete its digestive enzymes. It also stimulates smooth muscle contraction and increases blood circulation and water secretion in the stomach and intestine. The sequence is that of Gastrin (Gast) from Mus musculus (Mouse).